A 194-amino-acid chain; its full sequence is 3-isopropylmalate dehydratase small subunit (194 aa).

Belongs to the LeuD family. LeuD type 1 subfamily. In terms of assembly, heterodimer of LeuC and LeuD.

The enzyme catalyses (2R,3S)-3-isopropylmalate = (2S)-2-isopropylmalate. Its pathway is amino-acid biosynthesis; L-leucine biosynthesis; L-leucine from 3-methyl-2-oxobutanoate: step 2/4. Catalyzes the isomerization between 2-isopropylmalate and 3-isopropylmalate, via the formation of 2-isopropylmaleate. In Bacillus cereus (strain ATCC 14579 / DSM 31 / CCUG 7414 / JCM 2152 / NBRC 15305 / NCIMB 9373 / NCTC 2599 / NRRL B-3711), this protein is 3-isopropylmalate dehydratase small subunit.